The primary structure comprises 120 residues: Large ribosomal subunit protein uL18 (120 aa).

This sequence belongs to the universal ribosomal protein uL18 family. As to quaternary structure, part of the 50S ribosomal subunit; part of the 5S rRNA/L5/L18/L25 subcomplex. Contacts the 5S and 23S rRNAs.

This is one of the proteins that bind and probably mediate the attachment of the 5S RNA into the large ribosomal subunit, where it forms part of the central protuberance. The protein is Large ribosomal subunit protein uL18 of Rippkaea orientalis (strain PCC 8801 / RF-1) (Cyanothece sp. (strain PCC 8801)).